Here is a 272-residue protein sequence, read N- to C-terminus: NADPH-dependent aldehyde reductase 2, chloroplastic (272 aa).

Residues 1-53 (MAAASSVSSPPLCLAGRVAIVTGSSRGIGRAIAIHLAELGARVVVNYSTSPVE) constitute a chloroplast transit peptide. 26 to 50 (RGIGRAIAIHLAELGARVVVNYSTS) lines the NADP(+) pocket. Ser165 contributes to the substrate binding site. Tyr179 (proton acceptor) is an active-site residue.

This sequence belongs to the short-chain dehydrogenases/reductases (SDR) family.

The protein localises to the plastid. The protein resides in the chloroplast. In terms of biological role, aldehyde reductase that catalyzes the reduction of the aldehyde carbonyl groups on saturated and alpha,beta-unsaturated aldehydes with more than 5 carbons. No activity on alpha,beta-unsaturated ketones. Can use propionaldehyde, butyraldehyde, methylglyoxal, (e)-2-pentenal, (E)-2-hexenal, (Z)-3-hexenal and (E)-2-nonenal as substrates, but not propenal (acrolein), crotonaldehyde, 2-butanone, 3-buten-2-one or 1-penten-3-one. This Arabidopsis thaliana (Mouse-ear cress) protein is NADPH-dependent aldehyde reductase 2, chloroplastic.